Reading from the N-terminus, the 321-residue chain is Oxidoreductase P35 (321 aa).

Belongs to the Gfo/Idh/MocA family.

The protein localises to the cell surface. In terms of biological role, oxidoreductase that may be involved in ulvan degradation. Ulvan is the main polysaccharide component of the Ulvales (green seaweed) cell wall. It is composed of disaccharide building blocks comprising 3-sulfated rhamnose (Rha3S) linked to D-glucuronic acid (GlcA), L-iduronic acid (IduA), or D-xylose (Xyl). The sequence is that of Oxidoreductase P35 from Formosa agariphila (strain DSM 15362 / KCTC 12365 / LMG 23005 / KMM 3901 / M-2Alg 35-1).